A 292-amino-acid chain; its full sequence is Ribosomal protein L11 methyltransferase (292 aa).

The S-adenosyl-L-methionine site is built by Thr-138, Gly-159, Asp-181, and Asn-225.

Belongs to the methyltransferase superfamily. PrmA family.

The protein localises to the cytoplasm. The catalysed reaction is L-lysyl-[protein] + 3 S-adenosyl-L-methionine = N(6),N(6),N(6)-trimethyl-L-lysyl-[protein] + 3 S-adenosyl-L-homocysteine + 3 H(+). Methylates ribosomal protein L11. The protein is Ribosomal protein L11 methyltransferase of Leuconostoc citreum (strain KM20).